The primary structure comprises 424 residues: MCVSKKKLASKKIPTNNSSNNPLKNEIIENILENDFIKDITMEFNGISFPVYSEFERTYQQLFGDYKTKIRCQDYLFLIRHRKLYNGGLHKIQIANYIKNHFITRYDFDKISMTHLMCACIYSINDSNLELVKLLVNNFNFTKRDNTDHTALSYAFKNPGNIKIIGFLLNYIESDYFEIDQNIINDSLIYWSKTDYLPCIEMAKLLIKAEASINYKDRTGSTILINIINNKNYYNITDLVKFLLTEGVDIHESTTICPDNNVVKEKWTTSIGSKLIESVKFEINGEQIFPSYYGDYDESCRKPKYSIMNHLIKRYCWDNNKRIISMFYDYGYRELPNTTNTSILEFTKQIVNDIEFRESYFRKFKPDLIEKQREIVYKPGSVRSEIIKLNWEINSGQTLNPNKYIFDYFGINNLIELEKMINDV.

ANK repeat units lie at residues 115-144, 147-177, 184-215, and 219-252; these read HLMC…FTKR, TDHT…SDYF, INDS…SINY, and TGST…DIHE.

The sequence is that of Putative ankyrin repeat protein R858 from Acanthamoeba polyphaga (Amoeba).